A 689-amino-acid chain; its full sequence is DNA-directed RNA polymerase subunit beta' (689 aa).

Zn(2+) is bound by residues cysteine 76, cysteine 78, cysteine 94, and cysteine 97. 3 residues coordinate Mg(2+): aspartate 496, aspartate 498, and aspartate 500.

It belongs to the RNA polymerase beta' chain family. RpoC1 subfamily. As to quaternary structure, in plastids the minimal PEP RNA polymerase catalytic core is composed of four subunits: alpha, beta, beta', and beta''. When a (nuclear-encoded) sigma factor is associated with the core the holoenzyme is formed, which can initiate transcription. Mg(2+) serves as cofactor. Zn(2+) is required as a cofactor.

Its subcellular location is the plastid. It is found in the chloroplast. The catalysed reaction is RNA(n) + a ribonucleoside 5'-triphosphate = RNA(n+1) + diphosphate. Its function is as follows. DNA-dependent RNA polymerase catalyzes the transcription of DNA into RNA using the four ribonucleoside triphosphates as substrates. This is DNA-directed RNA polymerase subunit beta' from Illicium oligandrum (Star anise).